A 323-amino-acid chain; its full sequence is tRNA dimethylallyltransferase (323 aa).

13–20 (GPTASGKT) provides a ligand contact to ATP. 15–20 (TASGKT) is a binding site for substrate. 4 interaction with substrate tRNA regions span residues 42–45 (DSAL), 166–170 (QRIQR), 251–256 (RCVGYR), and 284–291 (KRQITWLR).

This sequence belongs to the IPP transferase family. As to quaternary structure, monomer. Mg(2+) is required as a cofactor.

It carries out the reaction adenosine(37) in tRNA + dimethylallyl diphosphate = N(6)-dimethylallyladenosine(37) in tRNA + diphosphate. Catalyzes the transfer of a dimethylallyl group onto the adenine at position 37 in tRNAs that read codons beginning with uridine, leading to the formation of N6-(dimethylallyl)adenosine (i(6)A). This is tRNA dimethylallyltransferase from Acidovorax ebreus (strain TPSY) (Diaphorobacter sp. (strain TPSY)).